Here is a 114-residue protein sequence, read N- to C-terminus: ATP-dependent Clp protease adapter protein ClpS (114 aa).

It belongs to the ClpS family. As to quaternary structure, binds to the N-terminal domain of the chaperone ClpA.

Its function is as follows. Involved in the modulation of the specificity of the ClpAP-mediated ATP-dependent protein degradation. The chain is ATP-dependent Clp protease adapter protein ClpS from Bdellovibrio bacteriovorus (strain ATCC 15356 / DSM 50701 / NCIMB 9529 / HD100).